The following is a 155-amino-acid chain: Large ribosomal subunit protein uL16 (155 aa).

This sequence belongs to the universal ribosomal protein uL16 family. Part of the 50S ribosomal subunit.

In terms of biological role, binds 23S rRNA and is also seen to make contacts with the A and possibly P site tRNAs. This Synechococcus sp. (strain CC9311) protein is Large ribosomal subunit protein uL16.